A 353-amino-acid polypeptide reads, in one-letter code: Photosystem II protein D1 (353 aa).

Residue T2 is modified to N-acetylthreonine. Position 2 is a phosphothreonine (T2). The next 3 helical transmembrane spans lie at 29–46 (YIGW…TATS), 118–133 (HFLL…EWEL), and 142–156 (WIAV…AAAA). Residue H118 coordinates chlorophyll a. Y126 is a pheophytin a binding site. 2 residues coordinate [CaMn4O5] cluster: D170 and E189. The helical transmembrane segment at 197-218 (FHMLGVAGVFGGSLFSAMHGSL) threads the bilayer. Chlorophyll a is bound at residue H198. A quinone contacts are provided by residues H215 and 264–265 (SF). H215 provides a ligand contact to Fe cation. H272 lines the Fe cation pocket. The chain crosses the membrane as a helical span at residues 274-288 (FLAAWPVVGIWFTAL). [CaMn4O5] cluster contacts are provided by H332, E333, D342, and A344. Residues 345 to 353 (SVEAPSVKA) constitute a propeptide that is removed on maturation.

It belongs to the reaction center PufL/M/PsbA/D family. In terms of assembly, PSII is composed of 1 copy each of membrane proteins PsbA, PsbB, PsbC, PsbD, PsbE, PsbF, PsbH, PsbI, PsbJ, PsbK, PsbL, PsbM, PsbT, PsbX, PsbY, PsbZ, Psb30/Ycf12, at least 3 peripheral proteins of the oxygen-evolving complex and a large number of cofactors. It forms dimeric complexes. It depends on The D1/D2 heterodimer binds P680, chlorophylls that are the primary electron donor of PSII, and subsequent electron acceptors. It shares a non-heme iron and each subunit binds pheophytin, quinone, additional chlorophylls, carotenoids and lipids. D1 provides most of the ligands for the Mn4-Ca-O5 cluster of the oxygen-evolving complex (OEC). There is also a Cl(-1) ion associated with D1 and D2, which is required for oxygen evolution. The PSII complex binds additional chlorophylls, carotenoids and specific lipids. as a cofactor. Tyr-161 forms a radical intermediate that is referred to as redox-active TyrZ, YZ or Y-Z. Post-translationally, C-terminally processed by CTPA; processing is essential to allow assembly of the oxygen-evolving complex and thus photosynthetic growth.

It is found in the plastid. The protein resides in the chloroplast thylakoid membrane. It carries out the reaction 2 a plastoquinone + 4 hnu + 2 H2O = 2 a plastoquinol + O2. Its function is as follows. Photosystem II (PSII) is a light-driven water:plastoquinone oxidoreductase that uses light energy to abstract electrons from H(2)O, generating O(2) and a proton gradient subsequently used for ATP formation. It consists of a core antenna complex that captures photons, and an electron transfer chain that converts photonic excitation into a charge separation. The D1/D2 (PsbA/PsbD) reaction center heterodimer binds P680, the primary electron donor of PSII as well as several subsequent electron acceptors. The sequence is that of Photosystem II protein D1 from Angiopteris evecta (Mule's foot fern).